The following is a 146-amino-acid chain: MMYKILCLSLLVAAVARDQVDVKDCANHEIKKVLVPGCHGSEPCIIHRGKPFQLEAVFEANQNTKTAKIEIKASIDGLEVDVPGIDPNACHYMKCPLVKGQQYDIKYTWNVPKIAPKSENVVVTVKVMGDDGVLACAIATHAKIRD.

The first 17 residues, Met-1–Arg-17, serve as a signal peptide directing secretion. Intrachain disulfides connect Cys-25–Cys-136, Cys-38–Cys-44, and Cys-90–Cys-95.

This sequence belongs to the NPC2 family.

Its subcellular location is the secreted. The chain is Mite group 2 allergen Der p 2 (DERP2) from Dermatophagoides pteronyssinus (European house dust mite).